Consider the following 517-residue polypeptide: DNA relaxase MbeA (517 aa).

Residue Y19 is the O-(5'-phospho-DNA)-tyrosine intermediate of the active site. 3 residues coordinate a divalent metal cation: H97, E104, and N106. 3 disordered regions span residues 281–310 (YSPV…QEGR), 380–405 (PSVR…VTQS), and 496–517 (SLER…SLGW). The span at 297-310 (GRGERGDDAAQEGR) shows a compositional bias: basic and acidic residues. Positions 496–510 (SLERERQPEIQERTL) are enriched in basic and acidic residues.

This sequence to E.coli MbaA and MbkA. In terms of assembly, interacts with MbeB and MbeC to form the relaxosome. Mn(2+) is required as a cofactor. The cofactor is Co(2+). It depends on Ni(2+) as a cofactor.

The enzyme catalyses ATP-independent breakage of single-stranded DNA, followed by passage and rejoining.. Its function is as follows. Relaxase involved in plasmid ColE1 conjugative mobilization and is thus essential to promote the specific transfer of the plasmid during conjugation. First catalyzes the specific cleavage of one of the DNA strands at oriT, forming a covalent 5'-phosphotyrosine intermediate. The nic site corresponds to 5'-(1469)CTGG/CTTA(1462)-3' in the cleaved strand. The cleaved strand is then transferred through the dedicated type IV secretion apparatus. MbeA remains covalently linked at the 5' end of the strand, and once in the recipient cell, it probably catalyzes the rejoining of the two ends of the strand, re-forming the circular plasmid DNA. Is functional in vitro without a requirement for the conjugative accessory proteins. The sequence is that of DNA relaxase MbeA (mbeA) from Escherichia coli.